The sequence spans 550 residues: Chaperonin GroEL (550 aa).

ATP is bound by residues 30-33, Lys-51, 87-91, Gly-415, 478-480, and Asp-494; these read TLGP, DGTTT, and NAA.

The protein belongs to the chaperonin (HSP60) family. Forms a cylinder of 14 subunits composed of two heptameric rings stacked back-to-back. Interacts with the co-chaperonin GroES.

The protein resides in the cytoplasm. The enzyme catalyses ATP + H2O + a folded polypeptide = ADP + phosphate + an unfolded polypeptide.. Its function is as follows. Together with its co-chaperonin GroES, plays an essential role in assisting protein folding. The GroEL-GroES system forms a nano-cage that allows encapsulation of the non-native substrate proteins and provides a physical environment optimized to promote and accelerate protein folding. In Desulfosudis oleivorans (strain DSM 6200 / JCM 39069 / Hxd3) (Desulfococcus oleovorans), this protein is Chaperonin GroEL.